We begin with the raw amino-acid sequence, 161 residues long: Nucleotide-binding protein PputW619_0959 (161 aa).

Belongs to the YajQ family.

Nucleotide-binding protein. In Pseudomonas putida (strain W619), this protein is Nucleotide-binding protein PputW619_0959.